A 438-amino-acid polypeptide reads, in one-letter code: Probable phosphoglucosamine mutase (438 aa).

The Phosphoserine intermediate role is filled by Ser-91. Positions 91, 228, 230, and 232 each coordinate Mg(2+). Ser-91 carries the post-translational modification Phosphoserine.

The protein belongs to the phosphohexose mutase family. Mg(2+) is required as a cofactor. Activated by phosphorylation.

The catalysed reaction is alpha-D-glucosamine 1-phosphate = D-glucosamine 6-phosphate. Catalyzes the conversion of glucosamine-6-phosphate to glucosamine-1-phosphate. The protein is Probable phosphoglucosamine mutase of Methanocella arvoryzae (strain DSM 22066 / NBRC 105507 / MRE50).